Reading from the N-terminus, the 549-residue chain is Glucose-6-phosphate isomerase (549 aa).

3 positions are modified to N6-acetyllysine: K80, K228, and K234. The active-site Proton donor is E355. Catalysis depends on residues H386 and K514.

The protein belongs to the GPI family.

Its subcellular location is the cytoplasm. It catalyses the reaction alpha-D-glucose 6-phosphate = beta-D-fructose 6-phosphate. It functions in the pathway carbohydrate biosynthesis; gluconeogenesis. It participates in carbohydrate degradation; glycolysis; D-glyceraldehyde 3-phosphate and glycerone phosphate from D-glucose: step 2/4. Catalyzes the reversible isomerization of glucose-6-phosphate to fructose-6-phosphate. The chain is Glucose-6-phosphate isomerase from Escherichia coli (strain SMS-3-5 / SECEC).